Here is a 369-residue protein sequence, read N- to C-terminus: tRNA(Met) cytidine acetate ligase (369 aa).

Residues 7–20 (VAEF…HKYL), Gly96, Asn152, and Arg175 contribute to the ATP site.

It belongs to the TmcAL family.

Its subcellular location is the cytoplasm. It catalyses the reaction cytidine(34) in elongator tRNA(Met) + acetate + ATP = N(4)-acetylcytidine(34) in elongator tRNA(Met) + AMP + diphosphate. Its function is as follows. Catalyzes the formation of N(4)-acetylcytidine (ac(4)C) at the wobble position of elongator tRNA(Met), using acetate and ATP as substrates. First activates an acetate ion to form acetyladenylate (Ac-AMP) and then transfers the acetyl group to tRNA to form ac(4)C34. The protein is tRNA(Met) cytidine acetate ligase of Streptococcus agalactiae serotype Ia (strain ATCC 27591 / A909 / CDC SS700).